A 1120-amino-acid chain; its full sequence is DNA-directed RNA polymerase subunit beta (1120 aa).

The protein belongs to the RNA polymerase beta chain family. In terms of assembly, in plastids the minimal PEP RNA polymerase catalytic core is composed of four subunits: alpha, beta, beta', and beta''. When a (nuclear-encoded) sigma factor is associated with the core the holoenzyme is formed, which can initiate transcription.

The protein localises to the plastid. It is found in the chloroplast. It catalyses the reaction RNA(n) + a ribonucleoside 5'-triphosphate = RNA(n+1) + diphosphate. Its function is as follows. DNA-dependent RNA polymerase catalyzes the transcription of DNA into RNA using the four ribonucleoside triphosphates as substrates. The sequence is that of DNA-directed RNA polymerase subunit beta from Gracilaria tenuistipitata var. liui (Red alga).